The sequence spans 1515 residues: DNA topoisomerase 2-binding protein 1 (1515 aa).

BRCT domains follow at residues 101–189 (VYNM…KYTD) and 195–284 (FKCP…IYKA). Thr298 is modified (phosphothreonine). BRCT domains are found at residues 353–443 (APED…SYIH), 551–636 (REEG…SNPL), and 644–741 (SGVT…HFLV). Residues 759-893 (VSSNPDLPAH…TDSHSASPQL (135 aa)) are interaction with CIP2A. Thr782 carries the phosphothreonine modification. Positions 799-826 (SQQRGQDPTFPPVRQPLTKEPSLHLDTP) are disordered. A Phosphothreonine modification is found at Thr851. Ser862, Ser863, Ser866, Ser888, and Ser890 each carry phosphoserine. Residues 880–891 (SSRNTDSHSASP) show a composition bias toward polar residues. Residues 880–901 (SSRNTDSHSASPQLKGAHLEEE) are disordered. The 92-residue stretch at 902-993 (ETRKPLDSVV…KHLPESLYPH (92 aa)) folds into the BRCT 6 domain. Positions 1020–1055 (VSASKDDGPDHLSVEGNETNTMGTNDKESPLLNGSG) are disordered. A compositionally biased stretch (basic and acidic residues) spans 1023 to 1032 (SKDDGPDHLS). The residue at position 1064 (Thr1064) is a Phosphothreonine. Low complexity predominate over residues 1097–1116 (SRSSCNSASSTPDSARSVRS). Disordered regions lie at residues 1097 to 1119 (SRSS…SGRS), 1203 to 1255 (VTQA…TQEE), and 1491 to 1515 (KKGG…PRVH). Over residues 1217 to 1229 (PPVAERPLIPEPQ) the composition is skewed to pro residues. A BRCT 7 domain is found at 1255–1347 (ETHRKVKKQY…RFVQEEDYEW (93 aa)). The Nuclear localization signal motif lies at 1510–1513 (KRPR).

Belongs to the TOPBP1 family. Interacts (via BRCT domains 1 and 2) with (phosphorylated) MDC1; promoting TOPBP1 recruitment to DNA damage sites during mitosis. Interacts (via BRCT domains 7 and 8) with (autophosphorylated) ATR; promoting activation of ATR. Interacts (via BRCT domains 7 and 8) with (phosphorylated) POLQ; specifically binds POLQ phosphorylated by PLK1, promoting POLQ recruitment to DNA damage sites. Interacts (via BRCT domains 1 and 2) with (phosphorylated) RAD9A. Interacts (via BRCT domain 2) with (phosphorylated) TP53BP1. Interacts (via BRCT domain 2) with (phosphorylated) HTATSF1. Interacts (via BRCT domains 7 and 8) with (phosphorylated) RAD51; promoting RAD51 recruitment to damaged chromatin. Interacts with CIP2A; forming the CIP2A-TOPBP1 complex. Interacts with POLE. Interacts with UBR5. Interacts with E2F1. Interacts with PML. Interacts with SMARCA2. Interacts with SMARCA4. Interacts with RHNO1. May interact with TOP2B. Interacts with TICRR. Interacts with HELB. Post-translationally, phosphorylated on serine and threonine residues in response to X-ray irradiation. Ubiquitinated and degraded by the proteasome. X-ray irradiation reduces ubiquitination. Deubiquitinated by USP13; leading to TOPBP1 stabilizion and activation of the ATR-TOPBP1 axis pathway. Highly expressed in testis.

The protein localises to the nucleus. It localises to the chromosome. It is found in the cytoplasm. The protein resides in the cytoskeleton. Its subcellular location is the microtubule organizing center. The protein localises to the centrosome. It localises to the spindle pole. Scaffold protein that acts as a key protein-protein adapter in DNA replication and DNA repair. Composed of multiple BRCT domains, which specifically recognize and bind phosphorylated proteins, bringing proteins together into functional combinations. Required for DNA replication initiation but not for the formation of pre-replicative complexes or the elongation stages. Necessary for the loading of replication factors onto chromatin, including GMNC, CDC45, DNA polymerases and components of the GINS complex. Plays a central role in DNA repair by bridging proteins and promoting recruitment of proteins to DNA damage sites. Involved in double-strand break (DSB) repair via homologous recombination in S-phase by promoting the exchange between the DNA replication factor A (RPA) complex and RAD51. Mechanistically, TOPBP1 is recruited to DNA damage sites in S-phase via interaction with phosphorylated HTATSF1, and promotes the loading of RAD51, thereby facilitating RAD51 nucleofilaments formation and RPA displacement, followed by homologous recombination. Involved in microhomology-mediated end-joining (MMEJ) DNA repair by promoting recruitment of polymerase theta (POLQ) to DNA damage sites during mitosis. MMEJ is an alternative non-homologous end-joining (NHEJ) machinery that takes place during mitosis to repair DSBs in DNA that originate in S-phase. Recognizes and binds POLQ phosphorylated by PLK1, enabling its recruitment to DSBs for subsequent repair. Involved in G1 DNA damage checkpoint by acting as a molecular adapter that couples TP53BP1 and the 9-1-1 complex. In response to DNA damage, triggers the recruitment of checkpoint signaling proteins on chromatin, which activate the CHEK1 signaling pathway and block S-phase progression. Acts as an activator of the kinase activity of ATR. Also required for chromosomal stability when DSBs occur during mitosis by forming filamentous assemblies that bridge MDC1 and tether broken chromosomes during mitosis. Together with CIP2A, plays an essential role in the response to genome instability generated by the presence of acentric chromosome fragments derived from shattered chromosomes within micronuclei. Micronuclei, which are frequently found in cancer cells, consist of chromatin surrounded by their own nuclear membrane: following breakdown of the micronuclear envelope, a process associated with chromothripsis, the CIP2A-TOPBP1 complex tethers chromosome fragments during mitosis to ensure clustered segregation of the fragments to a single daughter cell nucleus, facilitating re-ligation with limited chromosome scattering and loss. Recruits the SWI/SNF chromatin remodeling complex to E2F1-responsive promoters, thereby down-regulating E2F1 activity and inhibiting E2F1-dependent apoptosis during G1/S transition and after DNA damage. In Mus musculus (Mouse), this protein is DNA topoisomerase 2-binding protein 1.